Consider the following 116-residue polypeptide: Aspartate 1-decarboxylase (116 aa).

Serine 25 (schiff-base intermediate with substrate; via pyruvic acid) is an active-site residue. Serine 25 bears the Pyruvic acid (Ser) mark. Substrate is bound at residue threonine 57. Residue tyrosine 58 is the Proton donor of the active site. 73 to 75 (GAA) contacts substrate.

It belongs to the PanD family. As to quaternary structure, heterooctamer of four alpha and four beta subunits. Requires pyruvate as cofactor. Is synthesized initially as an inactive proenzyme, which is activated by self-cleavage at a specific serine bond to produce a beta-subunit with a hydroxyl group at its C-terminus and an alpha-subunit with a pyruvoyl group at its N-terminus.

Its subcellular location is the cytoplasm. It catalyses the reaction L-aspartate + H(+) = beta-alanine + CO2. The protein operates within cofactor biosynthesis; (R)-pantothenate biosynthesis; beta-alanine from L-aspartate: step 1/1. Functionally, catalyzes the pyruvoyl-dependent decarboxylation of aspartate to produce beta-alanine. The protein is Aspartate 1-decarboxylase of Leptospira interrogans serogroup Icterohaemorrhagiae serovar Lai (strain 56601).